Consider the following 504-residue polypeptide: Taurochenodeoxycholic 6 alpha-hydroxylase (504 aa).

Transmembrane regions (helical) follow at residues 6-26 (LASV…LLLL) and 110-130 (APVL…LLNG). Cys451 provides a ligand contact to heme.

It belongs to the cytochrome P450 family. Heme serves as cofactor. Primarily expressed in liver. Low expression in kidney.

The protein localises to the endoplasmic reticulum membrane. It carries out the reaction taurochenodeoxycholate + reduced [NADPH--hemoprotein reductase] + O2 = taurohyocholate + oxidized [NADPH--hemoprotein reductase] + H2O + H(+). The enzyme catalyses lithocholate + reduced [NADPH--hemoprotein reductase] + O2 = hyodeoxycholate + oxidized [NADPH--hemoprotein reductase] + H2O + H(+). Its function is as follows. Catalyzes the 6 alpha hydroxylation oxidation of taurodeoxycholate to produce the pig specific bile acid taurohyocholic acid. The chain is Taurochenodeoxycholic 6 alpha-hydroxylase (CYP4A21) from Sus scrofa (Pig).